The following is a 200-amino-acid chain: Recombination protein RecR (200 aa).

The C4-type zinc finger occupies 57–72 (CSQCRTFTEQETCAIC). Residues 81–176 (GLLCVVEMPA…KVSRIAHGIP (96 aa)) enclose the Toprim domain.

It belongs to the RecR family.

In terms of biological role, may play a role in DNA repair. It seems to be involved in an RecBC-independent recombinational process of DNA repair. It may act with RecF and RecO. The protein is Recombination protein RecR of Actinobacillus succinogenes (strain ATCC 55618 / DSM 22257 / CCUG 43843 / 130Z).